The sequence spans 146 residues: Large ribosomal subunit protein uL15 (146 aa).

Over residues 1–13 (MKLHELKPAEGSR) the composition is skewed to basic and acidic residues. The interval 1–59 (MKLHELKPAEGSRKVRNRVGRGTSSGNGKTSGRGQKGQKARSGGGVRLGFEGGQTPLFR) is disordered. Composition is skewed to gly residues over residues 23–35 (TSSG…GRGQ) and 42–52 (SGGGVRLGFEG).

It belongs to the universal ribosomal protein uL15 family. As to quaternary structure, part of the 50S ribosomal subunit.

Its function is as follows. Binds to the 23S rRNA. In Streptococcus agalactiae serotype Ia (strain ATCC 27591 / A909 / CDC SS700), this protein is Large ribosomal subunit protein uL15.